Consider the following 406-residue polypeptide: GTPase Obg (406 aa).

Residues 1–159 (MKFVDEVSIH…RDLKLELKVL (159 aa)) enclose the Obg domain. Residues 127-148 (NTRFKSSTNRAPRQTTPGKPGE) are disordered. The segment covering 129–143 (RFKSSTNRAPRQTTP) has biased composition (polar residues). The OBG-type G domain maps to 160–334 (ADVGLLGLPN…LSQDIMRYLD (175 aa)). Residues 166–173 (GLPNAGKS), 191–195 (FTTLV), 213–216 (DIPG), 283–286 (NKMD), and 315–317 (SAL) each bind GTP. The Mg(2+) site is built by serine 173 and threonine 193. Positions 382 to 406 (AGAVDDDDFDDEEDDGDGPEIFYVP) are disordered. Acidic residues predominate over residues 385–399 (VDDDDFDDEEDDGDG).

Belongs to the TRAFAC class OBG-HflX-like GTPase superfamily. OBG GTPase family. Monomer. Requires Mg(2+) as cofactor.

It is found in the cytoplasm. Its function is as follows. An essential GTPase which binds GTP, GDP and possibly (p)ppGpp with moderate affinity, with high nucleotide exchange rates and a fairly low GTP hydrolysis rate. Plays a role in control of the cell cycle, stress response, ribosome biogenesis and in those bacteria that undergo differentiation, in morphogenesis control. This Pseudomonas aeruginosa (strain LESB58) protein is GTPase Obg.